The chain runs to 270 residues: 26S proteasome regulatory subunit rpn12 (270 aa).

The 173-residue stretch at 65-237 (CDIESFARYA…LETEDGMLID (173 aa)) folds into the PCI domain.

This sequence belongs to the proteasome subunit S14 family.

Functionally, acts as a regulatory subunit of the 26S proteasome which is involved in the ATP-dependent degradation of ubiquitinated proteins. This chain is 26S proteasome regulatory subunit rpn12 (rpn12), found in Schizosaccharomyces pombe (strain 972 / ATCC 24843) (Fission yeast).